The primary structure comprises 245 residues: Small ribosomal subunit protein uS2 (245 aa).

Belongs to the universal ribosomal protein uS2 family.

This is Small ribosomal subunit protein uS2 from Pseudomonas fluorescens (strain ATCC BAA-477 / NRRL B-23932 / Pf-5).